Here is a 547-residue protein sequence, read N- to C-terminus: Chaperonin GroEL (547 aa).

ATP-binding positions include 30 to 33 (TLGP), K51, 87 to 91 (DGTTT), G415, and D496. The disordered stretch occupies residues 528 to 547 (KEGAGAGGGMPDMGGMGGMM). A compositionally biased stretch (gly residues) spans 531–547 (AGAGGGMPDMGGMGGMM).

Belongs to the chaperonin (HSP60) family. As to quaternary structure, forms a cylinder of 14 subunits composed of two heptameric rings stacked back-to-back. Interacts with the co-chaperonin GroES.

Its subcellular location is the cytoplasm. The enzyme catalyses ATP + H2O + a folded polypeptide = ADP + phosphate + an unfolded polypeptide.. Functionally, together with its co-chaperonin GroES, plays an essential role in assisting protein folding. The GroEL-GroES system forms a nano-cage that allows encapsulation of the non-native substrate proteins and provides a physical environment optimized to promote and accelerate protein folding. The sequence is that of Chaperonin GroEL from Dinoroseobacter shibae (strain DSM 16493 / NCIMB 14021 / DFL 12).